The chain runs to 164 residues: Anterior gradient protein 2 (164 aa).

Positions 1–20 (METVLKTLFVLLVATSLTLA) are cleaved as a signal peptide. 2 consecutive short sequence motifs (homodimer stabilization; interchain) follow at residues 34–43 (SRGWGDNLEW) and 49–56 (EGLYKAKT).

This sequence belongs to the AGR family. In terms of assembly, monomer and homodimer.

The protein localises to the secreted. It localises to the endoplasmic reticulum. In Xenopus tropicalis (Western clawed frog), this protein is Anterior gradient protein 2.